The sequence spans 236 residues: 2,3,4,5-tetrahydropyridine-2,6-dicarboxylate N-acetyltransferase (236 aa).

This sequence belongs to the transferase hexapeptide repeat family. DapH subfamily.

It carries out the reaction (S)-2,3,4,5-tetrahydrodipicolinate + acetyl-CoA + H2O = L-2-acetamido-6-oxoheptanedioate + CoA. Its pathway is amino-acid biosynthesis; L-lysine biosynthesis via DAP pathway; LL-2,6-diaminopimelate from (S)-tetrahydrodipicolinate (acetylase route): step 1/3. In terms of biological role, catalyzes the transfer of an acetyl group from acetyl-CoA to tetrahydrodipicolinate. This is 2,3,4,5-tetrahydropyridine-2,6-dicarboxylate N-acetyltransferase from Clostridium botulinum (strain Langeland / NCTC 10281 / Type F).